The sequence spans 374 residues: Erythronate-4-phosphate dehydrogenase (374 aa).

Residues serine 45 and threonine 67 each contribute to the substrate site. NAD(+) is bound at residue aspartate 147. Arginine 208 is an active-site residue. Residue aspartate 232 coordinates NAD(+). The active site involves glutamate 237. Histidine 254 serves as the catalytic Proton donor. Glycine 257 serves as a coordination point for NAD(+).

This sequence belongs to the D-isomer specific 2-hydroxyacid dehydrogenase family. PdxB subfamily. In terms of assembly, homodimer.

It is found in the cytoplasm. It catalyses the reaction 4-phospho-D-erythronate + NAD(+) = (R)-3-hydroxy-2-oxo-4-phosphooxybutanoate + NADH + H(+). The protein operates within cofactor biosynthesis; pyridoxine 5'-phosphate biosynthesis; pyridoxine 5'-phosphate from D-erythrose 4-phosphate: step 2/5. In terms of biological role, catalyzes the oxidation of erythronate-4-phosphate to 3-hydroxy-2-oxo-4-phosphonooxybutanoate. This chain is Erythronate-4-phosphate dehydrogenase, found in Pseudoalteromonas atlantica (strain T6c / ATCC BAA-1087).